The primary structure comprises 417 residues: MHLLAFGLNHHTAPLSIREKLAFPAETLPRALESLLASQAAREAAIVSTCNRTEIYCSSPDPHAALDWLCQFHGLSRAELEPYLYRLEASQAARHAFRVASGLDSMVLGETQILGQLKDAVRSAEHAGALGTLLNGLFQRTFAVAKEVRSSTAVGASSVSMSAAAVKLAEQIFPSVAELNVLFVGAGEMIELVATHFAARNPSCITVANRTLERGQRLAEQFGGNAITLAELPESLARYDVVVTSTASQLPIIGKGMVERAIKARRHRPMFMLDLAVPRDVELEVGKLDDVFLYSVDDIAGIVEVGKEARQNAAEEAETIIQARVAEFTDWLKKRETVPLIRALRDEADRARRHALEGALKQLARGDAPEKVLEALSVQLTNKLMHPPTQALSSGSGAEHDAQVQAIARLYRLHPES.

Substrate is bound by residues 49-52, Ser105, 110-112, and Gln116; these read TCNR and ETQ. Cys50 serves as the catalytic Nucleophile. Position 185–190 (185–190) interacts with NADP(+); that stretch reads GAGEMI.

This sequence belongs to the glutamyl-tRNA reductase family. In terms of assembly, homodimer.

It carries out the reaction (S)-4-amino-5-oxopentanoate + tRNA(Glu) + NADP(+) = L-glutamyl-tRNA(Glu) + NADPH + H(+). Its pathway is porphyrin-containing compound metabolism; protoporphyrin-IX biosynthesis; 5-aminolevulinate from L-glutamyl-tRNA(Glu): step 1/2. Functionally, catalyzes the NADPH-dependent reduction of glutamyl-tRNA(Glu) to glutamate 1-semialdehyde (GSA). The sequence is that of Glutamyl-tRNA reductase from Chromobacterium violaceum (strain ATCC 12472 / DSM 30191 / JCM 1249 / CCUG 213 / NBRC 12614 / NCIMB 9131 / NCTC 9757 / MK).